The primary structure comprises 682 residues: MELFPIIPAGGILALLVALYMTSSVLKEDTGPKEMQTIAAAIREGAMAFLNRQYRTIAGLALIVAVLLALLTRQYHTAVAFITGAFASALSGYIGMYVAVNANLRVAAGARNSLNKALTVAFRGGAVTGLAVTALSLLGVTSLFYAFGGATNPTRAPLDIVGFGFGASFVALFAQLSGGIYTKAADVGADLVGKVEAGIPEDDPRNPAVIADLVGDNVGDCAGRGADLFESTAAENIGAMILGIALVPFFGVKGIVFPLVARAAGIIASIIGMFFVRAEENQDPMAALNRGYIVTSILAIIFLYPISRYMLSGPGVNFIYFYGAGIIGIVLSFIFVLITQYYTSYDYRPVKEIARASITGPATNIISGVAVGFESTALPVVFISLAILGAYWLGLKSGLPGGGLYGTAVATMGMLSTAAYILAMDTYGPITDNAGGIVEMSGAPEEVRRRTDRLDASGNTTKALTKGYAIGSAALATFLLFSAYIDEVKIALNIKGNFPVDIGKPEVFVGAFIAAMMVLLFSSTAIRAVGNAAQYVILEVRRQFKEIPGIMEGTAKPEYGACVDIVTRGALKEMVLPGLIVVITPIIVGLVLKAEAAAAFLMVGTITGVIVALFLNNGGGAWDNAKKYIELGNFGGKGSEAHKAGVVGDTVGDPFKDTAGPSLHVLVKLISTITLVLAGLFI.

5 consecutive transmembrane segments (helical) span residues 1 to 21, 56 to 76, 78 to 98, 130 to 150, and 160 to 180; these read MELF…ALYM, TIAG…RQYH, AVAF…GMYV, LAVT…FGGA, and IVGF…SGGI. Lys-183 is a substrate binding site. 3 residues coordinate Mg(2+): Asp-186, Asp-190, and Asp-216. The next 7 helical transmembrane spans lie at 237 to 257, 258 to 278, 291 to 311, 318 to 338, 353 to 373, 375 to 395, and 404 to 424; these read IGAM…GIVF, PLVA…FVRA, GYIV…RYML, FIYF…FVLI, IARA…AVGF, STAL…WLGL, and LYGT…ILAM. Asp-432 serves as a coordination point for Mg(2+). 4 consecutive transmembrane segments (helical) span residues 468 to 488, 506 to 526, 574 to 594, and 595 to 615; these read YAIG…IDEV, EVFV…STAI, MVLP…VLKA, and EAAA…ALFL. The Ca(2+) site is built by Asp-623, Asp-649, and Asp-653. Lys-656 is a binding site for substrate. The helical transmembrane segment at 662–682 threads the bilayer; the sequence is SLHVLVKLISTITLVLAGLFI.

It belongs to the H(+)-translocating pyrophosphatase (TC 3.A.10) family. K(+)-insensitive subfamily. Homodimer. Mg(2+) is required as a cofactor.

The protein localises to the cell membrane. The catalysed reaction is diphosphate + H2O + H(+)(in) = 2 phosphate + 2 H(+)(out). Proton pump that utilizes the energy of pyrophosphate hydrolysis as the driving force for proton movement across the membrane. Generates a proton motive force. The sequence is that of K(+)-insensitive pyrophosphate-energized proton pump 2 from Moorella thermoacetica (strain ATCC 39073 / JCM 9320).